The chain runs to 838 residues: Urease (838 aa).

A Urease domain is found at 402–838; that stretch reads GGFDTHIHFI…LPLTQDYFVY (437 aa). Ni(2+)-binding residues include histidine 407, histidine 409, and lysine 490. Residue lysine 490 is modified to N6-carboxylysine. Histidine 492 serves as a coordination point for substrate. 2 residues coordinate Ni(2+): histidine 519 and histidine 545. The Proton donor role is filled by histidine 593. Aspartate 633 is a binding site for Ni(2+).

The protein in the C-terminal section; belongs to the metallo-dependent hydrolases superfamily. Urease alpha subunit family. In terms of assembly, homohexamer. The cofactor is Ni cation. Carboxylation allows a single lysine to coordinate two nickel ions.

The catalysed reaction is urea + 2 H2O + H(+) = hydrogencarbonate + 2 NH4(+). The protein operates within nitrogen metabolism; urea degradation; CO(2) and NH(3) from urea (urease route): step 1/1. The sequence is that of Urease (ure1) from Aspergillus fumigatus (strain ATCC MYA-4609 / CBS 101355 / FGSC A1100 / Af293) (Neosartorya fumigata).